Reading from the N-terminus, the 806-residue chain is SH3-containing GRB2-like protein 3-interacting protein 1 (806 aa).

Disordered regions lie at residues 1 to 115 (MMEG…ESHK) and 142 to 278 (SIGN…QAAT). Basic and acidic residues-rich tracts occupy residues 16-32 (RKKE…DRDG) and 40-54 (PPYH…EGGK). Phosphoserine occurs at positions 78, 104, 105, 107, 149, 151, 156, and 169. Thr180 and Thr182 each carry phosphothreonine. Phosphoserine occurs at positions 236 and 243. The segment covering 245-260 (TGTPPPLPPKTVPATP) has biased composition (pro residues). Residues Thr247 and Thr259 each carry the phosphothreonine modification. Phosphoserine is present on residues Ser265, Asp274, Ser287, Ser289, Ser300, Ser316, and Ser319. Positions 265–276 (SPLTVATGNDQA) are enriched in polar residues. The span at 315–324 (FSDASPEHVT) shows a compositional bias: basic and acidic residues. Residues 315–533 (FSDASPEHVT…SRGPSPLTMG (219 aa)) form a disordered region. Thr324, Thr328, and Thr335 each carry phosphothreonine. Low complexity predominate over residues 335–345 (TPPAASDIPAD). Position 338 is a phosphoserine (Ala338). A compositionally biased stretch (pro residues) spans 346–369 (SPAPAPPGPTGSAGPPGPPGPRHV). Residue Ser371 is modified to Phosphoserine. Positions 377-392 (EVQKKVAEQTFIKDDY) are enriched in basic and acidic residues. Ser398 carries the post-translational modification Phosphoserine. Thr409 is subject to Phosphothreonine. The span at 436–453 (TSGASSPARPATPLVPCS) shows a compositional bias: low complexity. A compositionally biased stretch (pro residues) spans 454-473 (TTPPPPPPRPPSRPKLPPGK). Composition is skewed to low complexity over residues 480 to 490 (SRPFSPPIHSS) and 497 to 520 (PLAR…TTPT). 3 positions are modified to phosphoserine: Ser484, Ser505, and Gly533. The region spanning 537–805 (TLPVAAAFTE…RFAAGKYLAD (269 aa)) is the MHD domain. Interaction with DPF motifs-containing proteins regions lie at residues 539–545 (PVAAAFT), 571–573 (SFP), 645–648 (TYYN), and 791–796 (SLIKKR). The interval 627–806 (MPNLMTHLKK…FAAGKYLADN (180 aa)) is necessary and sufficient to mediate interaction with CANX.

In terms of assembly, interacts with proteins essential or regulating the formation of functional clathrin-coated pits. Interacts with CANX. Interacts with AP2A1. Interacts with EPS15. Interacts with SH3GL3. Interacts with AMPH. Interacts with ITSN1 (via SH3 domains). Interacts with and REPS1. Detected in brain, spinal cord and cerebellum.

Its subcellular location is the membrane. The protein localises to the clathrin-coated pit. Functionally, may function in clathrin-mediated endocytosis. Has both a membrane binding/tubulating activity and the ability to recruit proteins essential to the formation of functional clathrin-coated pits. Has a preference for membranes enriched in phosphatidylserine and phosphoinositides and is required for the endocytosis of the transferrin receptor. May also bind tubulin. May play a role in the regulation of energy homeostasis. This is SH3-containing GRB2-like protein 3-interacting protein 1 (Sgip1) from Mus musculus (Mouse).